Here is a 255-residue protein sequence, read N- to C-terminus: Hydroxyacylglutathione hydrolase (255 aa).

Positions 56, 58, 60, 61, 114, 133, and 171 each coordinate Zn(2+).

Belongs to the metallo-beta-lactamase superfamily. Glyoxalase II family. In terms of assembly, monomer. Requires Zn(2+) as cofactor.

The catalysed reaction is an S-(2-hydroxyacyl)glutathione + H2O = a 2-hydroxy carboxylate + glutathione + H(+). Its pathway is secondary metabolite metabolism; methylglyoxal degradation; (R)-lactate from methylglyoxal: step 2/2. Thiolesterase that catalyzes the hydrolysis of S-D-lactoyl-glutathione to form glutathione and D-lactic acid. The protein is Hydroxyacylglutathione hydrolase of Bradyrhizobium sp. (strain ORS 278).